Here is a 103-residue protein sequence, read N- to C-terminus: Small ribosomal subunit protein uS10 (103 aa).

Belongs to the universal ribosomal protein uS10 family. Part of the 30S ribosomal subunit.

Its function is as follows. Involved in the binding of tRNA to the ribosomes. The chain is Small ribosomal subunit protein uS10 from Pseudomonas aeruginosa (strain LESB58).